Consider the following 481-residue polypeptide: UDP-N-acetylmuramate--L-alanine ligase (481 aa).

Residue 115-121 (GTHGKTT) coordinates ATP.

The protein belongs to the MurCDEF family.

The protein resides in the cytoplasm. The enzyme catalyses UDP-N-acetyl-alpha-D-muramate + L-alanine + ATP = UDP-N-acetyl-alpha-D-muramoyl-L-alanine + ADP + phosphate + H(+). Its pathway is cell wall biogenesis; peptidoglycan biosynthesis. Cell wall formation. This is UDP-N-acetylmuramate--L-alanine ligase from Granulibacter bethesdensis (strain ATCC BAA-1260 / CGDNIH1).